Here is a 158-residue protein sequence, read N- to C-terminus: Regulator of sigma D (158 aa).

It belongs to the Rsd/AlgQ family. In terms of assembly, interacts with RpoD.

It localises to the cytoplasm. In terms of biological role, binds RpoD and negatively regulates RpoD-mediated transcription activation by preventing the interaction between the primary sigma factor RpoD with the catalytic core of the RNA polymerase and with promoter DNA. May be involved in replacement of the RNA polymerase sigma subunit from RpoD to RpoS during the transition from exponential growth to the stationary phase. In Escherichia fergusonii (strain ATCC 35469 / DSM 13698 / CCUG 18766 / IAM 14443 / JCM 21226 / LMG 7866 / NBRC 102419 / NCTC 12128 / CDC 0568-73), this protein is Regulator of sigma D.